The chain runs to 963 residues: Copalyl diphosphate synthase (963 aa).

Positions 1 to 539 are type II terpene cyclase (TC); sequence MSPMDLQESA…EAYILAALKR (539 aa). The substrate binding stretch occupies residues 227-292; sequence ATQWDDECED…FIEKIRSYLH (66 aa). 2 residues coordinate Mg(2+): aspartate 311 and aspartate 314. The DXDD signature appears at 311 to 314; it reads DADD. The NSE/DTE motif lies at 333 to 341; that stretch reads AMLKEFEEE. Substrate is bound by residues 337–341 and 521–522; these read EFEEE and VT. Residues 540-659 form a linker region; sequence AADLPDENAE…SVSVHTDHSD (120 aa). The segment covering 627–648 has biased composition (polar residues); sequence TNGHYVNGTNHETPLTNGISNG. The tract at residues 627 to 657 is disordered; the sequence is TNGHYVNGTNHETPLTNGISNGDSVSVHTDH. Residues 660 to 963 form a geranylfarnesyl diphosphate synthase (PT) region; the sequence is SYYQRSDWTA…KILARMSLEL (304 aa). Positions 688, 691, and 720 each coordinate isopentenyl diphosphate. Residues aspartate 727 and aspartate 731 each coordinate Mg(2+). The short motif at 727–731 is the DDXXD 1 element; the sequence is DDIQD. Arginine 736 is a binding site for dimethylallyl diphosphate. Arginine 737 contacts isopentenyl diphosphate. Residues lysine 814, threonine 815, glutamine 848, asparagine 855, lysine 865, and lysine 875 each coordinate dimethylallyl diphosphate. Positions 851 to 855 match the DDXXD 2 motif; the sequence is DDYLN.

The protein in the N-terminal section; belongs to the terpene synthase family. It in the C-terminal section; belongs to the FPP/GGPP synthase family. In terms of assembly, homohexamer. Requires Mg(2+) as cofactor.

The catalysed reaction is isopentenyl diphosphate + (2E,6E)-farnesyl diphosphate = (2E,6E,10E)-geranylgeranyl diphosphate + diphosphate. The enzyme catalyses (2E,6E,10E)-geranylgeranyl diphosphate = (+)-copalyl diphosphate. Its function is as follows. Bifunctional terpene synthase that possesses both prenyltransferase and type II terpene cyclase activity, converting isopentenyl diphosphate (IPP) and dimethylallyl diphosphate (DMAPP) into geranylgeranyl diphosphate (GGPP) and further converting GGPP into copalyl diphosphate, respectively. This chain is Copalyl diphosphate synthase, found in Talaromyces verruculosus (Penicillium verruculosum).